We begin with the raw amino-acid sequence, 726 residues long: Amino-acid acetyltransferase, mitochondrial (726 aa).

Over residues 1–18 the composition is skewed to polar residues; that stretch reads MSSRTLVGLRSTTSTHLQ. A mitochondrion-targeting transit peptide spans 1 to 44; sequence MSSRTLVGLRSTTSTHLQRSGVAAAAAVSSSSTSSSGSAPRRCL. Residues 1-64 are disordered; that stretch reads MSSRTLVGLR…SAEFSSSSKS (64 aa). A compositionally biased stretch (low complexity) spans 20–39; the sequence is SGVAAAAAVSSSSTSSSGSA. The span at 45–58 shows a compositional bias: polar residues; it reads SSASGRQVQQSAEF. Residues 547–716 form the N-acetyltransferase domain; that stretch reads DRPRLGLDDP…YEAVCRSIQP (170 aa).

The protein belongs to the acetyltransferase family.

It is found in the mitochondrion. It catalyses the reaction L-glutamate + acetyl-CoA = N-acetyl-L-glutamate + CoA + H(+). It functions in the pathway amino-acid biosynthesis; L-arginine biosynthesis; N(2)-acetyl-L-ornithine from L-glutamate: step 1/4. N-acetylglutamate synthase involved in arginine biosynthesis. The chain is Amino-acid acetyltransferase, mitochondrial (arg2) from Aspergillus niger (strain ATCC MYA-4892 / CBS 513.88 / FGSC A1513).